The chain runs to 91 residues: Large ribosomal subunit protein bL27 (91 aa).

Positions 1–22 (MAHKKGQGSSRNGRDSNPQYRG) are disordered. The segment covering 7 to 19 (QGSSRNGRDSNPQ) has biased composition (polar residues).

Belongs to the bacterial ribosomal protein bL27 family.

This chain is Large ribosomal subunit protein bL27, found in Myxococcus xanthus (strain DK1622).